The following is a 257-amino-acid chain: Type III pantothenate kinase (257 aa).

24–31 (MIGNSRLH) contributes to the ATP binding site. Substrate-binding positions include tyrosine 96 and 100-103 (GIDR). The active-site Proton acceptor is the aspartate 102. Aspartate 122 serves as a coordination point for K(+). Threonine 125 lines the ATP pocket. Substrate is bound at residue threonine 180.

This sequence belongs to the type III pantothenate kinase family. As to quaternary structure, homodimer. It depends on NH4(+) as a cofactor. K(+) serves as cofactor.

The protein resides in the cytoplasm. It catalyses the reaction (R)-pantothenate + ATP = (R)-4'-phosphopantothenate + ADP + H(+). It functions in the pathway cofactor biosynthesis; coenzyme A biosynthesis; CoA from (R)-pantothenate: step 1/5. Its function is as follows. Catalyzes the phosphorylation of pantothenate (Pan), the first step in CoA biosynthesis. The sequence is that of Type III pantothenate kinase from Synechocystis sp. (strain ATCC 27184 / PCC 6803 / Kazusa).